Consider the following 368-residue polypeptide: MASVKLPWDLEEEILSRLPPRSLVRFRTVCKHWNGLFSDKRFVKKHLVRARPQFIFLTESKKMYSIEIDLGGTIEVREVPYDFHCQPMKKNFTTIMACDGLLFRDFWKQGVAVWNPWLRQVGWIEYEDKGFRFCGVGYDSCKPDKCYKILGYFNCTRRLSDSLQEGYYQAAIYECASQAFKFIDTPNPFNLWPNKDPLSVNGNLYWLAHNHPETLEYFIETFDFSMEIFKPFCLLPCRKDFGSNELVLAVFKEDRFSLLKQCFETTKIEIWVTKMKIDREEEVVWIKFMTLPTTNLPNLDDTYCCSSYFIFDKTIIMCCGDYKTGATCIYMVRGDMFKKIQINSGIFQFSYCVYLPNLISVPFESHQV.

Residues 1–46 (MASVKLPWDLEEEILSRLPPRSLVRFRTVCKHWNGLFSDKRFVKKH) enclose the F-box domain.

The chain is F-box protein At3g17710 from Arabidopsis thaliana (Mouse-ear cress).